Reading from the N-terminus, the 179-residue chain is Repressor of phase 1 flagellin gene (179 aa).

Functionally, transcriptional repressor of the FliC phase-1 flagellin. The polypeptide is Repressor of phase 1 flagellin gene (fljA) (Salmonella abortus-equi).